Reading from the N-terminus, the 528-residue chain is Golgi resident protein GCP60 (528 aa).

The disordered stretch occupies residues 1–71 (MAAVLNAERL…EAAAGGAAEE (71 aa)). At Ala2 the chain carries N-acetylalanine; in Golgi resident protein GCP60, N-terminally processed. Ser13 bears the Phosphoserine mark. Thr18 bears the Phosphothreonine mark. 3 positions are modified to phosphoserine: Ser20, Ser43, and Ser47. The span at 34–45 (LLPPPLPPPSPP) shows a compositional bias: pro residues. Over residues 54–69 (SGEQPEPGEAAAGGAA) the composition is skewed to low complexity. The 92-residue stretch at 83–174 (LEELYGLALR…LNRCCHLFST (92 aa)) folds into the ACB domain. A coiled-coil region spans residues 174–257 (TYVASHKIEK…AALNSQTAVQ (84 aa)). Residues 182–230 (EKEEQEKKRKEEEERRRREEEERERLQKEEEKRRREEEERLRREEEERR) are disordered. The interval 182 to 240 (EKEEQEKKRKEEEERRRREEEERERLQKEEEKRRREEEERLRREEEERRRIEEERLRLE) is charged amino-acid region (CAR). Positions 241–308 (QQKQQIMAAL…QQQAALQKQQ (68 aa)) are q domain; Interaction with PI4KB, TBC1D22A and TBC1D22B. The disordered stretch occupies residues 335 to 362 (NGQAKTHTDSSEKELEPEAAEEALENGP). The span at 340 to 350 (THTDSSEKELE) shows a compositional bias: basic and acidic residues. The 143-residue stretch at 384–526 (KEKIQQDADS…SKSVYYRVYY (143 aa)) folds into the GOLD domain. The interval 514–516 (LWR) is membrane-binding.

In terms of assembly, homodimer. Interacts with the C-terminal cytoplasmic domain of giantin/GOLGB1. Interacts with PBR and PKA regulatory subunit RI-alpha. Does not interact with PKA regulatory subunit RI-beta nor PKA regulatory subunit RII-alpha. Interacts (via Q domain) with PI4KB (via N-terminus). Interacts (via Q domain) with TBC1D22A and TBC1D22B; interactions with PI4KB and with TBC1D22A and TBC1D22B are mutually exclusive. Interacts with C10ORF76 and RAB11B. As to quaternary structure, (Microbial infection) Interacts (via GOLD domain) with 3A proteins from various picornaviruses, including poliovirus, enterovirus A71, enterovirus D68, hepatitis A virus, human parechovirus 1, poliovirus, Human rhinovirus-14 (Hrv-14), coysackievirus B2, coysackievirus B3, coysackievirus B5, Aichi virus and human klassevirus. Interacts (via GOLD domain) with Aichi virus protein 3A; this interaction allows the formation of a 3A/ACBD3/PI4KB complex in order to synthesize PI4P at the viral RNA replication sites. Interacts with Aichi virus protein 2B. Interacts with Aichi virus protein 2C. In terms of tissue distribution, ubiquitous, with highest expression in testis and ovary.

Its subcellular location is the golgi apparatus membrane. The protein resides in the mitochondrion. Involved in the maintenance of Golgi structure by interacting with giantin, affecting protein transport between the endoplasmic reticulum and Golgi. Involved in hormone-induced steroid biosynthesis in testicular Leydig cells. Recruits PI4KB to the Golgi apparatus membrane; enhances the enzyme activity of PI4KB activity via its membrane recruitment thereby increasing the local concentration of the substrate in the vicinity of the kinase. Functionally, (Microbial infection) Plays an essential role in Aichi virus RNA replication by recruiting PI4KB at the viral replication sites. This is Golgi resident protein GCP60 (ACBD3) from Homo sapiens (Human).